Here is a 429-residue protein sequence, read N- to C-terminus: Tol-Pal system protein TolB (429 aa).

Residues 1-22 form the signal peptide; that stretch reads MTRRLFILITIMLCLIPALLHS. 2 disordered regions span residues 362-383 and 407-429; these read PDGT…RWSP and GSGQ…SPRW. Positions 363–374 are enriched in polar residues; it reads DGTNDTRLTSEG.

Belongs to the TolB family. In terms of assembly, the Tol-Pal system is composed of five core proteins: the inner membrane proteins TolA, TolQ and TolR, the periplasmic protein TolB and the outer membrane protein Pal. They form a network linking the inner and outer membranes and the peptidoglycan layer.

It localises to the periplasm. Functionally, part of the Tol-Pal system, which plays a role in outer membrane invagination during cell division and is important for maintaining outer membrane integrity. In Geobacter metallireducens (strain ATCC 53774 / DSM 7210 / GS-15), this protein is Tol-Pal system protein TolB.